The sequence spans 452 residues: D-inositol 3-phosphate glycosyltransferase (452 aa).

His25 contacts 1D-myo-inositol 3-phosphate. UDP-N-acetyl-alpha-D-glucosamine is bound by residues 31-32 (QP) and Gly39. 1D-myo-inositol 3-phosphate-binding positions include 36 to 41 (DAGGMN), Lys94, Tyr127, Thr151, and Arg171. 3 residues coordinate UDP-N-acetyl-alpha-D-glucosamine: Arg245, Lys250, and Gln309. The Mg(2+) site is built by Tyr318, Arg319, and Ser321. 2 residues coordinate UDP-N-acetyl-alpha-D-glucosamine: Glu331 and Glu339. Residue Thr345 participates in Mg(2+) binding.

Belongs to the glycosyltransferase group 1 family. MshA subfamily. In terms of assembly, homodimer.

The catalysed reaction is 1D-myo-inositol 3-phosphate + UDP-N-acetyl-alpha-D-glucosamine = 1D-myo-inositol 2-acetamido-2-deoxy-alpha-D-glucopyranoside 3-phosphate + UDP + H(+). Catalyzes the transfer of a N-acetyl-glucosamine moiety to 1D-myo-inositol 3-phosphate to produce 1D-myo-inositol 2-acetamido-2-deoxy-glucopyranoside 3-phosphate in the mycothiol biosynthesis pathway. In Rhodococcus jostii (strain RHA1), this protein is D-inositol 3-phosphate glycosyltransferase.